The primary structure comprises 248 residues: MSLFPSLTLLLLSVVATSYSETVTCEDSQKICPAVIACNSPGINGFPGKDGRDGTKGEKGEPGQGLRGLQGPPGKLGPPGNPGSSGSPGPKGQKGDPGESPDCESSLAASERKALQTEMARIKKWLTFSLGRQVGNKFFLTNGEMMTFDKVKALCAEFQASVATPRNAAENRAIQNLIKEEAFLGITDENTEGEFVDLTGNKLTYTNWNDGEPNNAGSNEDCVLLLKNGKWNDIPCSSSHLALCEFPI.

Positions 1–20 are cleaved as a signal peptide; that stretch reads MSLFPSLTLLLLSVVATSYS. Residues 42-99 enclose the Collagen-like domain; the sequence is GINGFPGKDGRDGTKGEKGEPGQGLRGLQGPPGKLGPPGNPGSSGSPGPKGQKGDPGE. The segment at 43 to 111 is disordered; sequence INGFPGKDGR…DCESSLAASE (69 aa). Pro47 carries the post-translational modification 4-hydroxyproline. Basic and acidic residues predominate over residues 49 to 61; that stretch reads KDGRDGTKGEKGE. 4 positions are modified to 4-hydroxyproline: Pro73, Pro79, Pro82, and Pro88. The segment covering 82–91 has biased composition (low complexity); that stretch reads PGSSGSPGPK. A coiled-coil region spans residues 112–130; sequence RKALQTEMARIKKWLTFSL. Positions 134 to 245 constitute a C-type lectin domain; that stretch reads VGNKFFLTNG…CSSSHLALCE (112 aa). 2 disulfides stabilise this stretch: Cys155–Cys244 and Cys222–Cys236.

As to quaternary structure, oligomeric complex of 3 or more homotrimers. Interacts with MASP1 and MASP2. Interacts with MEP1A and MEP1B and may inhibit their catalytic activity. Hydroxylation on proline residues within the sequence motif, GXPG, is most likely to be 4-hydroxy as this fits the requirement for 4-hydroxylation in vertebrates.

It is found in the secreted. Functionally, calcium-dependent lectin involved in innate immune defense. Binds mannose, fucose and N-acetylglucosamine on different microorganisms and activates the lectin complement pathway. Binds to late apoptotic cells, as well as to apoptotic blebs and to necrotic cells, but not to early apoptotic cells, facilitating their uptake by macrophages. The chain is Mannose-binding protein C (MBL2) from Macaca fascicularis (Crab-eating macaque).